The following is a 1904-amino-acid chain: Callose synthase 10 (1904 aa).

The HAT 1 repeat unit spans residues 100 to 132 (VIKQKLAKRDGASIDRDRDIERLWEFYKLYKRR). 6 helical membrane passes run 491–511 (SFIR…IIAF), 532–552 (AIMN…AYSM), 562–582 (VIRF…YVKV), 594–614 (FFFH…LIFG), 661–681 (YVAF…FLQI), and 722–742 (VLAI…AIIG). An LRR 1 repeat occupies 678–701 (FLQIKPLVKPTNTIIHLPPFQYSW). LRR repeat units follow at residues 751–774 (LGEI…FAQN) and 925–948 (TLNL…LIRN). An HAT 2 repeat occupies 1074-1107 (YSSSELRSENEDGISILFYLQKIFPDEWENFLER). The stretch at 1159–1181 (FLERRGLGVDDASLTNMPRGFES) is one LRR 4 repeat. Helical transmembrane passes span 1474 to 1494 (FTTV…YVFL), 1529 to 1549 (FLVQ…ILEL), 1554 to 1574 (AIFS…TFSL), 1621 to 1641 (AFEV…DGGA), 1644 to 1664 (FVLL…APYI), 1747 to 1767 (LALY…FKLF), 1783 to 1803 (FLQG…IAMT), 1811 to 1831 (FACV…AITW), and 1853 to 1873 (AAMG…PFIS). Residues 1659-1691 (LFAPYIFNPSGFEWQKTVEDFEDWVSWLMYKGG) form an HAT 3 repeat.

The protein belongs to the glycosyltransferase 48 family.

Its subcellular location is the cell membrane. It carries out the reaction [(1-&gt;3)-beta-D-glucosyl](n) + UDP-alpha-D-glucose = [(1-&gt;3)-beta-D-glucosyl](n+1) + UDP + H(+). Involved in sporophytic and gametophytic development. Required for normal plant development and for the proper accumulation of callose at cell plates, cll walls and plasmodesmata. During pollen formation, required for the entry of microspores into mitosis. During plant growth and development, callose is found as a transitory component of the cell plate in dividing cells, is a major component of pollen mother cell walls and pollen tubes, and is found as a structural component of plasmodesmatal canals. Required for proper cell division and tissue patterning throughout plant organs, including stomatal patterning. This Arabidopsis thaliana (Mouse-ear cress) protein is Callose synthase 10 (CALS10).